Consider the following 266-residue polypeptide: MKIGKFVIEGNAAIMGILNVTPDSFSDGGSYTTVQKALDHVEQMIADGAKIIDVGGESTRPGCQFVSATDEIDRVVPVIKAIKENYDILISIDTYKTETARAALEAGADILNDVWAGLYDGQMFALAAEYDAPIILMHNQDEEVYQEVTQDVCDFLGNRAQAALDAGVPKNNIWVDPGFGFAKSVQQNTELLKGLDRVCQLGYPVLFGISRKRVVDALLGGNTKAKERDGATAALSAYALGKGCQIVRVHDVKANQDIVAVLSQLM.

In terms of domain architecture, Pterin-binding spans 12–260 (AAIMGILNVT…DVKANQDIVA (249 aa)). Asn19 provides a ligand contact to Mg(2+). (7,8-dihydropterin-6-yl)methyl diphosphate-binding positions include Thr59, Asp93, Asn112, Asp176, Lys212, and 248 to 250 (RVH).

It belongs to the DHPS family. As to quaternary structure, homodimer or homotrimer. Requires Mg(2+) as cofactor.

The enzyme catalyses (7,8-dihydropterin-6-yl)methyl diphosphate + 4-aminobenzoate = 7,8-dihydropteroate + diphosphate. It functions in the pathway cofactor biosynthesis; tetrahydrofolate biosynthesis; 7,8-dihydrofolate from 2-amino-4-hydroxy-6-hydroxymethyl-7,8-dihydropteridine diphosphate and 4-aminobenzoate: step 1/2. Functionally, catalyzes the condensation of para-aminobenzoate (pABA) with 6-hydroxymethyl-7,8-dihydropterin diphosphate (DHPt-PP) to form 7,8-dihydropteroate (H2Pte), the immediate precursor of folate derivatives. The polypeptide is Dihydropteroate synthase (folP) (Streptococcus pyogenes serotype M1).